We begin with the raw amino-acid sequence, 387 residues long: ATP phosphoribosyltransferase regulatory subunit (387 aa).

This sequence belongs to the class-II aminoacyl-tRNA synthetase family. HisZ subfamily. As to quaternary structure, heteromultimer composed of HisG and HisZ subunits.

The protein resides in the cytoplasm. The protein operates within amino-acid biosynthesis; L-histidine biosynthesis; L-histidine from 5-phospho-alpha-D-ribose 1-diphosphate: step 1/9. In terms of biological role, required for the first step of histidine biosynthesis. May allow the feedback regulation of ATP phosphoribosyltransferase activity by histidine. This chain is ATP phosphoribosyltransferase regulatory subunit, found in Psychrobacter cryohalolentis (strain ATCC BAA-1226 / DSM 17306 / VKM B-2378 / K5).